The sequence spans 80 residues: Putative UPF0377 protein YMR324C (80 aa).

The chain crosses the membrane as a helical span at residues 13–33 (ACIFIDSVCEGIVFWGLCLFV).

The protein belongs to the UPF0377 family.

The protein localises to the membrane. The polypeptide is Putative UPF0377 protein YMR324C (Saccharomyces cerevisiae (strain ATCC 204508 / S288c) (Baker's yeast)).